The sequence spans 54 residues: Protein GndA (54 aa).

The helical transmembrane segment at 28 to 50 threads the bilayer; that stretch reads LFVVIVSFQQRALTSSVPVFLAV.

Its subcellular location is the cell inner membrane. This chain is Protein GndA, found in Escherichia coli (strain K12).